We begin with the raw amino-acid sequence, 349 residues long: uncharacterized protein (349 aa).

The THUMP domain occupies 51-160; the sequence is NIIKENKNNL…QDESYISIFQ (110 aa).

This is an uncharacterized protein from Methanocaldococcus jannaschii (strain ATCC 43067 / DSM 2661 / JAL-1 / JCM 10045 / NBRC 100440) (Methanococcus jannaschii).